The sequence spans 177 residues: Negative modulator of initiation of replication (177 aa).

It belongs to the SeqA family. Homodimer. Polymerizes to form helical filaments.

It is found in the cytoplasm. Negative regulator of replication initiation, which contributes to regulation of DNA replication and ensures that replication initiation occurs exactly once per chromosome per cell cycle. Binds to pairs of hemimethylated GATC sequences in the oriC region, thus preventing assembly of replication proteins and re-initiation at newly replicated origins. Repression is relieved when the region becomes fully methylated. This Vibrio cholerae serotype O1 (strain ATCC 39315 / El Tor Inaba N16961) protein is Negative modulator of initiation of replication.